A 510-amino-acid polypeptide reads, in one-letter code: 2,3-bisphosphoglycerate-independent phosphoglycerate mutase (510 aa).

Positions 11 and 61 each coordinate Mn(2+). The active-site Phosphoserine intermediate is the Ser-61. Substrate contacts are provided by residues His-124, 154–155 (RD), Arg-185, Arg-191, 260–263 (RPDR), and Lys-333. Mn(2+)-binding residues include Asp-398, His-402, Asp-439, His-440, and His-457.

The protein belongs to the BPG-independent phosphoglycerate mutase family. Monomer. The cofactor is Mn(2+).

The catalysed reaction is (2R)-2-phosphoglycerate = (2R)-3-phosphoglycerate. It functions in the pathway carbohydrate degradation; glycolysis; pyruvate from D-glyceraldehyde 3-phosphate: step 3/5. Its function is as follows. Catalyzes the interconversion of 2-phosphoglycerate and 3-phosphoglycerate. The protein is 2,3-bisphosphoglycerate-independent phosphoglycerate mutase of Mycoplasma mobile (strain ATCC 43663 / 163K / NCTC 11711) (Mesomycoplasma mobile).